The primary structure comprises 149 residues: Stathmin (149 aa).

Ala-2 is modified (N-acetylalanine). The residue at position 4 (Ser-4) is a Phosphoserine. One can recognise an SLD domain in the interval 4-145 (SDIQVKELEK…NKESKDPADE (142 aa)). Lys-9 is subject to N6-acetyllysine. Ser-16 is subject to Phosphoserine; by PKA. Phosphoserine; by CDK1, MAPK1 and MAPK3 is present on Ser-25. Residues 27–46 (RSKESVPDFPLSPPKKKDLS) are disordered. The residue at position 29 (Lys-29) is an N6-methyllysine. Ser-31 bears the Phosphoserine mark. Ser-38 carries the post-translational modification Phosphoserine; by CDK1, MAPK1 and MAPK3. A coiled-coil region spans residues 41 to 140 (KKKDLSLEEI…EEVRKNKESK (100 aa)). Ser-63 carries the phosphoserine; by PKA modification. N6-acetyllysine is present on residues Lys-100 and Lys-119. Basic and acidic residues predominate over residues 104 to 143 (KMEANKENREAQMAAKLERLREKDKHVEEVRKNKESKDPA). A disordered region spans residues 104-149 (KMEANKENREAQMAAKLERLREKDKHVEEVRKNKESKDPADETEAD).

Belongs to the stathmin family. In terms of assembly, binds to two alpha/beta-tubulin heterodimers. Interacts with KIST. Post-translationally, many different phosphorylated forms are observed depending on specific combinations among the sites which can be phosphorylated. MAPK is responsible for the phosphorylation of stathmin in response to NGF. Phosphorylation at Ser-16 seems to be required for neuron polarization. Highly expressed in the lateral nucleus of the amygdala.

It is found in the cytoplasm. Its subcellular location is the cytoskeleton. Functionally, involved in the regulation of the microtubule (MT) filament system by destabilizing microtubules. Prevents assembly and promotes disassembly of microtubules. Phosphorylation at Ser-16 may be required for axon formation during neurogenesis. Involved in the control of the learned and innate fear. The polypeptide is Stathmin (Stmn1) (Mus musculus (Mouse)).